The chain runs to 356 residues: MRVTDFSFELPESLIAHYPMPERSSCRLLSLDGPTGALTHGTFTDLLDKLNPGDLLVFNNTRVIPARLFGRKASGGKIEVLVERMLDDKRILAHIRASKAPKPGAELLLGDDERINATMTARHGALFEVEFNDQRSVLDILNSIGHMPLPPYIDRPDEDADRELYQTVYSEKPGAVAAPTAGLHFDEPLLEKLRAKGVEMAFVTLHVGAGTFQPVRVDTIEDHIMHSEYAEVPQDVVDAVLAAKARGNRVIAVGTTSVRSLESAAQAAKNDLIEPFFDDTQIFIYPGFQYKVVDALVTNFHLPESTLIMLVSAFAGYQHTMNAYKAAVEEKYRFFSYGDAMFITYNPQAINERVGE.

This sequence belongs to the QueA family. In terms of assembly, monomer.

It is found in the cytoplasm. The enzyme catalyses 7-aminomethyl-7-carbaguanosine(34) in tRNA + S-adenosyl-L-methionine = epoxyqueuosine(34) in tRNA + adenine + L-methionine + 2 H(+). It participates in tRNA modification; tRNA-queuosine biosynthesis. Its function is as follows. Transfers and isomerizes the ribose moiety from AdoMet to the 7-aminomethyl group of 7-deazaguanine (preQ1-tRNA) to give epoxyqueuosine (oQ-tRNA). This is S-adenosylmethionine:tRNA ribosyltransferase-isomerase from Escherichia coli O127:H6 (strain E2348/69 / EPEC).